The primary structure comprises 671 residues: DNA ligase (671 aa).

Residues 34-38, 83-84, and E115 contribute to the NAD(+) site; these read DAEYD and SL. The N6-AMP-lysine intermediate role is filled by K117. Residues R138, E174, K291, and K315 each contribute to the NAD(+) site. The Zn(2+) site is built by C409, C412, C427, and C432. Residues 589–671 enclose the BRCT domain; that stretch reads RSGGPLTGKS…LQMIDTLEEA (83 aa).

Belongs to the NAD-dependent DNA ligase family. LigA subfamily. Mg(2+) serves as cofactor. Mn(2+) is required as a cofactor.

The catalysed reaction is NAD(+) + (deoxyribonucleotide)n-3'-hydroxyl + 5'-phospho-(deoxyribonucleotide)m = (deoxyribonucleotide)n+m + AMP + beta-nicotinamide D-nucleotide.. In terms of biological role, DNA ligase that catalyzes the formation of phosphodiester linkages between 5'-phosphoryl and 3'-hydroxyl groups in double-stranded DNA using NAD as a coenzyme and as the energy source for the reaction. It is essential for DNA replication and repair of damaged DNA. In Syntrophotalea carbinolica (strain DSM 2380 / NBRC 103641 / GraBd1) (Pelobacter carbinolicus), this protein is DNA ligase.